Here is a 343-residue protein sequence, read N- to C-terminus: MLAARLSRPLSQLPGKALSVCDRENGTRHTLLFYPASFSPDTRRTYTSQADAASGKAVLVTGCDSGFGFSLAKHLHSKGFLVFAGCLLKDKGDAGVRELDSLKSDRLRTIQLNVCNSEEVEKAVETVRSGLKDPEKGMWGLVNNAGISTFGEVEFTSMETYKEVAEVNLWGTVRTTKSFLPLLRRAKGRVVNISSMLGRMANPARSPYCITKFGVEAFSDCLRYEMHPLGVKVSVVEPGNFIAATSLYSPERIQAIAKKMWDELPEVVRKDYGKKYFDEKIAKMETYCNSGSTDTSSVINAVTHALTAATPYTRYHPMDYYWWLRMQVMTHFPGAISDKIYIH.

A mitochondrion-targeting transit peptide spans 1–46; the sequence is MLAARLSRPLSQLPGKALSVCDRENGTRHTLLFYPASFSPDTRRTY. 59–83 is a binding site for NAD(+); the sequence is LVTGCDSGFGFSLAKHLHSKGFLVF. An N6-acetyllysine modification is found at lysine 73. At lysine 103 the chain carries N6-acetyllysine; alternate. The residue at position 103 (lysine 103) is an N6-succinyllysine; alternate. 2 positions are modified to N6-acetyllysine: lysine 132 and lysine 177. Serine 195 contacts substrate. Tyrosine 208 acts as the Proton acceptor in catalysis. Lysine 212 is subject to N6-acetyllysine. O-linked (GlcNAc) serine glycosylation occurs at serine 219. Residue serine 246 is modified to Phosphoserine. The residue at position 258 (lysine 258) is an N6-acetyllysine. Lysine 259 carries the post-translational modification N6-acetyllysine; alternate. Lysine 259 carries the N6-succinyllysine; alternate modification. An N6-acetyllysine modification is found at lysine 280.

The protein belongs to the short-chain dehydrogenases/reductases (SDR) family. Homotetramer. Expressed in liver.

It is found in the mitochondrion inner membrane. The protein resides in the mitochondrion matrix. It carries out the reaction (R)-3-hydroxybutanoate + NAD(+) = acetoacetate + NADH + H(+). With respect to regulation, requires phosphatidylcholine as an allosteric activator for enzymatic activity. This chain is D-beta-hydroxybutyrate dehydrogenase, mitochondrial, found in Rattus norvegicus (Rat).